A 357-amino-acid polypeptide reads, in one-letter code: D-alanine--D-alanine ligase (357 aa).

The region spanning 134–339 is the ATP-grasp domain; sequence KQLFEHRGLP…YPDLIAKLID (206 aa). 167–222 contacts ATP; the sequence is NDKLTYPVFVKPANLGSSVGISKCNNEEELKSGITEAFQFDRKLVIEQGINAREIE. Residues D293, E306, and N308 each coordinate Mg(2+).

The protein belongs to the D-alanine--D-alanine ligase family. Mg(2+) is required as a cofactor. It depends on Mn(2+) as a cofactor.

It is found in the cytoplasm. The catalysed reaction is 2 D-alanine + ATP = D-alanyl-D-alanine + ADP + phosphate + H(+). The protein operates within cell wall biogenesis; peptidoglycan biosynthesis. Functionally, cell wall formation. The sequence is that of D-alanine--D-alanine ligase from Staphylococcus epidermidis (strain ATCC 12228 / FDA PCI 1200).